A 576-amino-acid chain; its full sequence is MNVLLKRRSLTFAPRWLWCKCRSSRSRPYSLAHAVDTSKMEATRRNGQIVKDLGRYYPSMSESALHDLCQEYKEVTIADFNERFLGNPATLHHEDNPNLLLSINGRIKSIRFSGQKIVFIDLYNGSSGLKNDTQLQLIVNYNKIGGSSEDKANFSEYMNFLKKGDYIKALGYPGFSQSRVKMLSLICNKLPIVLSVSQLPLPSRLNDETKIKSNRVVDYQLNGTQTLLVRARIIKLLRKFLDDRNFVEVETPILSSKSNGAMAKPFITSSKDFDHLELRIAPELWLKRLIISGLQKVYEIGKVFRNEGIDSTHNAEFSTLEFYETYMSMDDIVTRTEDLFKFLITNLQKFFQDTRLPVPKTFSELHLALSENNWKFRKVEFLPTLNKELGIDLMNSGLDINKPSELLKALPKDIAKKYFPSADNTGQLSSLQILNKLSDVFLEQRHCQSTLPTVIYHQPAILSPLAKTDPQNKQVTKRFEVFIKGKEYINAYEEENCPQLQLQKFLQQKQINELTGNKTETLSPVIDYQYVETMKYGMPPVGGFGLGIDRLCMLFCDKKRIEEVLPFGCVDDVNRQ.

The transit peptide at methionine 1 to serine 30 directs the protein to the mitochondrion.

It belongs to the class-II aminoacyl-tRNA synthetase family.

It localises to the mitochondrion matrix. It carries out the reaction tRNA(Lys) + L-lysine + ATP = L-lysyl-tRNA(Lys) + AMP + diphosphate. Functionally, catalyzes the attachment of lysine to tRNA(Lys) in the mitochondrion. The polypeptide is Lysine--tRNA ligase, mitochondrial (MSK1) (Saccharomyces cerevisiae (strain ATCC 204508 / S288c) (Baker's yeast)).